We begin with the raw amino-acid sequence, 417 residues long: D-inositol 3-phosphate glycosyltransferase (417 aa).

Histidine 15 is a binding site for 1D-myo-inositol 3-phosphate. Residues 21 to 22 and glycine 29 contribute to the UDP-N-acetyl-alpha-D-glucosamine site; that span reads QP. 1D-myo-inositol 3-phosphate is bound by residues 26 to 31, lysine 84, tyrosine 117, threonine 141, and arginine 161; that span reads DAGGMN. UDP-N-acetyl-alpha-D-glucosamine contacts are provided by arginine 241, lysine 246, and valine 299. Residues tyrosine 308, arginine 309, and alanine 311 each contribute to the Mg(2+) site. Glutamate 321 and glutamate 329 together coordinate UDP-N-acetyl-alpha-D-glucosamine. Residue threonine 335 coordinates Mg(2+).

The protein belongs to the glycosyltransferase group 1 family. MshA subfamily. In terms of assembly, homodimer.

The catalysed reaction is 1D-myo-inositol 3-phosphate + UDP-N-acetyl-alpha-D-glucosamine = 1D-myo-inositol 2-acetamido-2-deoxy-alpha-D-glucopyranoside 3-phosphate + UDP + H(+). Catalyzes the transfer of a N-acetyl-glucosamine moiety to 1D-myo-inositol 3-phosphate to produce 1D-myo-inositol 2-acetamido-2-deoxy-glucopyranoside 3-phosphate in the mycothiol biosynthesis pathway. The chain is D-inositol 3-phosphate glycosyltransferase from Xylanimonas cellulosilytica (strain DSM 15894 / JCM 12276 / CECT 5975 / KCTC 9989 / LMG 20990 / NBRC 107835 / XIL07).